Here is a 1582-residue protein sequence, read N- to C-terminus: SET-binding protein (1582 aa).

Disordered stretches follow at residues 1 to 76 (MEPR…WVAG), 124 to 246 (ITIK…KVPA), 278 to 416 (LLGS…KRQS), and 446 to 513 (SNSE…KLSE). Residues 18-27 (EFLQGSSSRS) show a composition bias toward polar residues. The segment covering 57 to 74 (GSGRDVDCNSNADSEKWV) has biased composition (basic and acidic residues). Composition is skewed to polar residues over residues 126-141 (IKQS…GKNS) and 213-229 (MEWS…QNCF). Over residues 278–298 (LLGSVVPSPSSHNSPATPSSS) the composition is skewed to low complexity. Residues 356–365 (ETTEGKREAY) are compositionally biased toward basic and acidic residues. Polar residues predominate over residues 368-388 (DSAQEASPARQSISSVSNPEN). Residues 450 to 465 (GSKKDPRVPKLGKMIE) are compositionally biased toward basic and acidic residues. The segment at residues 575 to 587 (KKKRGRPKKQPLL) is a DNA-binding region (a.T hook 1). Disordered regions lie at residues 595 to 617 (GTST…RKRR) and 709 to 787 (RGTI…ASTE). Positions 770–787 (LSTQLGGSNGNLSPASTE) are enriched in polar residues. N6-acetyllysine is present on Lys808. Over residues 845-871 (SPVSESHSEETIPSDSGIGTDNNSTSD) the composition is skewed to polar residues. Residues 845-880 (SPVSESHSEETIPSDSGIGTDNNSTSDQAEKSSESR) form a disordered region. The a.T hook 2 DNA-binding region spans 1007 to 1019 (KKKRGRPAKTNDT). Disordered stretches follow at residues 1128–1155 (VGGA…DRIL), 1182–1215 (SGSD…VSKN), 1236–1265 (AKDK…TRSE), 1429–1461 (QRQS…RDQM), 1470–1489 (LPSK…EPAS), and 1507–1582 (EAPP…DVLP). The span at 1137 to 1150 (RLHKRKHKHKRKHK) shows a compositional bias: basic residues. Residues 1182-1196 (SGSDKELPLVSEKSK) are compositionally biased toward basic and acidic residues. The span at 1439 to 1448 (VKKRRGRPRK) shows a compositional bias: basic residues. Residues 1440–1452 (KKRRGRPRKQPSQ) constitute a DNA-binding region (a.T hook 3). Pro residues-rich tracts occupy residues 1509–1533 (PPLP…PPLP) and 1546–1559 (QPPA…PQPL).

In terms of assembly, interacts with SET.

It localises to the nucleus. This chain is SET-binding protein (Setbp1), found in Mus musculus (Mouse).